Reading from the N-terminus, the 316-residue chain is Pantothenate kinase (316 aa).

Position 95–102 (95–102) interacts with ATP; it reads GSVAVGKS.

This sequence belongs to the prokaryotic pantothenate kinase family.

It is found in the cytoplasm. It catalyses the reaction (R)-pantothenate + ATP = (R)-4'-phosphopantothenate + ADP + H(+). It participates in cofactor biosynthesis; coenzyme A biosynthesis; CoA from (R)-pantothenate: step 1/5. The chain is Pantothenate kinase from Shewanella baltica (strain OS223).